Here is a 228-residue protein sequence, read N- to C-terminus: Urease accessory protein UreE (228 aa).

The disordered stretch occupies residues 188–228 (PLDEPHGSGLHIHAIHSHGDGHSHDHDHSHSHGDHDHDHKH). Basic and acidic residues predominate over residues 204-228 (SHGDGHSHDHDHSHSHGDHDHDHKH).

This sequence belongs to the UreE family.

Its subcellular location is the cytoplasm. Functionally, involved in urease metallocenter assembly. Binds nickel. Probably functions as a nickel donor during metallocenter assembly. In Yersinia kristensenii, this protein is Urease accessory protein UreE.